Reading from the N-terminus, the 320-residue chain is UV DNA damage endonuclease (320 aa).

This sequence belongs to the uve1/UvsE family.

Functionally, component in a DNA repair pathway. Removal of UV LIGHT damaged nucleotides. Recognizes pyrimidine dimers and cleave a phosphodiester bond immediately 5' to the lesion. In Bacillus velezensis (strain DSM 23117 / BGSC 10A6 / LMG 26770 / FZB42) (Bacillus amyloliquefaciens subsp. plantarum), this protein is UV DNA damage endonuclease.